A 105-amino-acid polypeptide reads, in one-letter code: Translation initiation factor 1A (105 aa).

Positions 12–87 (TRVRTPREEN…QKCDIIWRYT (76 aa)) constitute an S1-like domain.

Belongs to the eIF-1A family.

Its function is as follows. Seems to be required for maximal rate of protein biosynthesis. Enhances ribosome dissociation into subunits and stabilizes the binding of the initiator Met-tRNA(I) to 40 S ribosomal subunits. This Methanococcus aeolicus (strain ATCC BAA-1280 / DSM 17508 / OCM 812 / Nankai-3) protein is Translation initiation factor 1A (eIF1A).